The primary structure comprises 288 residues: Rhox homeobox family member 2 (288 aa).

Positions 16–136 (SPAVDDEKEL…GLEPGNAQQP (121 aa)) are disordered. The span at 39–48 (VKEEEEDAQP) shows a compositional bias: acidic residues. Positions 68 to 80 (GEEKDGGGEEKDG) are enriched in basic and acidic residues. Residues 134 to 193 (QQPNVHAFTPLQLQELERIFQREQFPSEFLRRRLARSMNVTELAVQIWFENRRAKWRRHQ) constitute a DNA-binding region (homeobox). Positions 186–195 (RAKWRRHQRA) match the Nuclear localization signal motif.

This sequence belongs to the paired-like homeobox family. PEPP subfamily. As to expression, testis. Not detected in epididymis nor placenta. In testis, mainly expressed in germ cells, but also detected in somatic cells such as Sertoli cells, Leydig cells and peritubular cells.

It is found in the nucleus. Transcription factor maybe involved in reproductive processes. Modulates expression of target genes encoding proteins involved in processes relevant to spermatogenesis. The chain is Rhox homeobox family member 2 from Homo sapiens (Human).